Consider the following 215-residue polypeptide: MASNSGHRDTRLLHGARTRSYGSLVQTTYSPAQIRKLEHQVQPGDTLQGLALRYGVSMEQIKRANRLYTNDSIFLKKSLYIPATAGQSDLSDDQNSQEGSETEGSPVKQPEKGEKQKSRHHVVQKDEMSPVDFMSRLDTNIRVSKRAAVKKLREGESFATEESTPGGAPGYQGNRTPSRQNSPQTQQRSLLGPVPLTITTRASTIRDHEDEIFKL.

Residues 37 to 81 (LEHQVQPGDTLQGLALRYGVSMEQIKRANRLYTNDSIFLKKSLYI) enclose the LysM domain. 2 stretches are compositionally biased toward polar residues: residues 86-103 (GQSD…SETE) and 173-189 (GNRT…QQRS). 2 disordered regions span residues 86–133 (GQSD…PVDF) and 148–203 (AVKK…TRAS).

The protein is LysM and putative peptidoglycan-binding domain-containing protein 1 (lysmd1) of Xenopus laevis (African clawed frog).